Reading from the N-terminus, the 180-residue chain is Translation initiation factor IF-3 (180 aa).

This sequence belongs to the IF-3 family. Monomer.

The protein resides in the cytoplasm. IF-3 binds to the 30S ribosomal subunit and shifts the equilibrium between 70S ribosomes and their 50S and 30S subunits in favor of the free subunits, thus enhancing the availability of 30S subunits on which protein synthesis initiation begins. In Caldanaerobacter subterraneus subsp. tengcongensis (strain DSM 15242 / JCM 11007 / NBRC 100824 / MB4) (Thermoanaerobacter tengcongensis), this protein is Translation initiation factor IF-3.